Here is a 256-residue protein sequence, read N- to C-terminus: Imidazole glycerol phosphate synthase subunit HisF (256 aa).

Residues Asp12 and Asp131 contribute to the active site.

The protein belongs to the HisA/HisF family. As to quaternary structure, heterodimer of HisH and HisF.

The protein localises to the cytoplasm. It catalyses the reaction 5-[(5-phospho-1-deoxy-D-ribulos-1-ylimino)methylamino]-1-(5-phospho-beta-D-ribosyl)imidazole-4-carboxamide + L-glutamine = D-erythro-1-(imidazol-4-yl)glycerol 3-phosphate + 5-amino-1-(5-phospho-beta-D-ribosyl)imidazole-4-carboxamide + L-glutamate + H(+). The protein operates within amino-acid biosynthesis; L-histidine biosynthesis; L-histidine from 5-phospho-alpha-D-ribose 1-diphosphate: step 5/9. Its function is as follows. IGPS catalyzes the conversion of PRFAR and glutamine to IGP, AICAR and glutamate. The HisF subunit catalyzes the cyclization activity that produces IGP and AICAR from PRFAR using the ammonia provided by the HisH subunit. This is Imidazole glycerol phosphate synthase subunit HisF from Pseudomonas paraeruginosa (strain DSM 24068 / PA7) (Pseudomonas aeruginosa (strain PA7)).